The chain runs to 431 residues: Histidinol dehydrogenase (431 aa).

NAD(+)-binding residues include tyrosine 127, glutamine 189, and asparagine 212. Serine 237, glutamine 259, and histidine 262 together coordinate substrate. Zn(2+) is bound by residues glutamine 259 and histidine 262. Active-site proton acceptor residues include glutamate 326 and histidine 327. Residues histidine 327, aspartate 360, glutamate 414, and histidine 419 each contribute to the substrate site. Residue aspartate 360 participates in Zn(2+) binding. Histidine 419 is a binding site for Zn(2+).

Belongs to the histidinol dehydrogenase family. Zn(2+) is required as a cofactor.

The enzyme catalyses L-histidinol + 2 NAD(+) + H2O = L-histidine + 2 NADH + 3 H(+). It participates in amino-acid biosynthesis; L-histidine biosynthesis; L-histidine from 5-phospho-alpha-D-ribose 1-diphosphate: step 9/9. In terms of biological role, catalyzes the sequential NAD-dependent oxidations of L-histidinol to L-histidinaldehyde and then to L-histidine. The protein is Histidinol dehydrogenase of Xylella fastidiosa (strain Temecula1 / ATCC 700964).